The chain runs to 116 residues: Ribosome-binding factor A (116 aa).

This sequence belongs to the RbfA family. In terms of assembly, monomer. Binds 30S ribosomal subunits, but not 50S ribosomal subunits or 70S ribosomes.

Its subcellular location is the cytoplasm. Its function is as follows. One of several proteins that assist in the late maturation steps of the functional core of the 30S ribosomal subunit. Associates with free 30S ribosomal subunits (but not with 30S subunits that are part of 70S ribosomes or polysomes). Required for efficient processing of 16S rRNA. May interact with the 5'-terminal helix region of 16S rRNA. The sequence is that of Ribosome-binding factor A from Streptococcus agalactiae.